Here is a 398-residue protein sequence, read N- to C-terminus: Na(+)/H(+) antiporter NhaA (398 aa).

12 consecutive transmembrane segments (helical) span residues 21–41 (AGGI…NSPL), 56–76 (LSVS…LVGL), 94–114 (VLPG…YVFI), 124–144 (GWAI…SLLG), 153–173 (VFLT…IAIF), 176–196 (SGLS…LVVL), 201–221 (VMTL…VLKS), 263–283 (IVPF…SLAG), 284–304 (LSLG…LVVG), 306–326 (LVGV…DLPA), 333–353 (MIGI…IGLL), and 367–387 (VGIL…LLMA).

This sequence belongs to the NhaA Na(+)/H(+) (TC 2.A.33) antiporter family.

The protein localises to the cell inner membrane. The catalysed reaction is Na(+)(in) + 2 H(+)(out) = Na(+)(out) + 2 H(+)(in). Its function is as follows. Na(+)/H(+) antiporter that extrudes sodium in exchange for external protons. This chain is Na(+)/H(+) antiporter NhaA, found in Mesorhizobium japonicum (strain LMG 29417 / CECT 9101 / MAFF 303099) (Mesorhizobium loti (strain MAFF 303099)).